The sequence spans 396 residues: Chaperone protein DnaJ (396 aa).

One can recognise a J domain in the interval 6-71; the sequence is DYYEVLEVTK…DKRSRYDQFG (66 aa). Residues 154 to 236 form a CR-type zinc finger; sequence GVEKKFKLKK…CGGDGIVYGE (83 aa). Zn(2+) contacts are provided by C167, C170, C184, C187, C210, C213, C224, and C227. 4 CXXCXGXG motif repeats span residues 167–174, 184–191, 210–217, and 224–231; these read CNHCHGTG, CPTCKGSG, CPTCNGEG, and CKECGGDG.

It belongs to the DnaJ family. As to quaternary structure, homodimer. Zn(2+) serves as cofactor.

It is found in the cytoplasm. Functionally, participates actively in the response to hyperosmotic and heat shock by preventing the aggregation of stress-denatured proteins and by disaggregating proteins, also in an autonomous, DnaK-independent fashion. Unfolded proteins bind initially to DnaJ; upon interaction with the DnaJ-bound protein, DnaK hydrolyzes its bound ATP, resulting in the formation of a stable complex. GrpE releases ADP from DnaK; ATP binding to DnaK triggers the release of the substrate protein, thus completing the reaction cycle. Several rounds of ATP-dependent interactions between DnaJ, DnaK and GrpE are required for fully efficient folding. Also involved, together with DnaK and GrpE, in the DNA replication of plasmids through activation of initiation proteins. The polypeptide is Chaperone protein DnaJ (Bacteroides thetaiotaomicron (strain ATCC 29148 / DSM 2079 / JCM 5827 / CCUG 10774 / NCTC 10582 / VPI-5482 / E50)).